Reading from the N-terminus, the 141-residue chain is Large ribosomal subunit protein uL11 (141 aa).

This sequence belongs to the universal ribosomal protein uL11 family. Part of the ribosomal stalk of the 50S ribosomal subunit. Interacts with L10 and the large rRNA to form the base of the stalk. L10 forms an elongated spine to which L12 dimers bind in a sequential fashion forming a multimeric L10(L12)X complex. One or more lysine residues are methylated.

Forms part of the ribosomal stalk which helps the ribosome interact with GTP-bound translation factors. The chain is Large ribosomal subunit protein uL11 from Kosmotoga olearia (strain ATCC BAA-1733 / DSM 21960 / TBF 19.5.1).